We begin with the raw amino-acid sequence, 140 residues long: Transcription antitermination protein NusB (140 aa).

Belongs to the NusB family.

Its function is as follows. Involved in transcription antitermination. Required for transcription of ribosomal RNA (rRNA) genes. Binds specifically to the boxA antiterminator sequence of the ribosomal RNA (rrn) operons. The polypeptide is Transcription antitermination protein NusB (Pseudothermotoga lettingae (strain ATCC BAA-301 / DSM 14385 / NBRC 107922 / TMO) (Thermotoga lettingae)).